The primary structure comprises 118 residues: Small ribosomal subunit protein uS13 (118 aa).

The disordered stretch occupies residues 92-118 (RRGLPVRGQRTKTNARTRKGPRKPIKK).

This sequence belongs to the universal ribosomal protein uS13 family. In terms of assembly, part of the 30S ribosomal subunit. Forms a loose heterodimer with protein S19. Forms two bridges to the 50S subunit in the 70S ribosome.

In terms of biological role, located at the top of the head of the 30S subunit, it contacts several helices of the 16S rRNA. In the 70S ribosome it contacts the 23S rRNA (bridge B1a) and protein L5 of the 50S subunit (bridge B1b), connecting the 2 subunits; these bridges are implicated in subunit movement. Contacts the tRNAs in the A and P-sites. In Yersinia enterocolitica serotype O:8 / biotype 1B (strain NCTC 13174 / 8081), this protein is Small ribosomal subunit protein uS13.